The primary structure comprises 89 residues: Small ribosomal subunit protein bS20 (89 aa).

This sequence belongs to the bacterial ribosomal protein bS20 family.

In terms of biological role, binds directly to 16S ribosomal RNA. The polypeptide is Small ribosomal subunit protein bS20 (Wolbachia pipientis subsp. Culex pipiens (strain wPip)).